A 435-amino-acid polypeptide reads, in one-letter code: Glutamate-1-semialdehyde 2,1-aminomutase (435 aa).

Position 266 is an N6-(pyridoxal phosphate)lysine (K266).

The protein belongs to the class-III pyridoxal-phosphate-dependent aminotransferase family. HemL subfamily. As to quaternary structure, homodimer. Pyridoxal 5'-phosphate serves as cofactor.

The protein resides in the cytoplasm. The catalysed reaction is (S)-4-amino-5-oxopentanoate = 5-aminolevulinate. It participates in porphyrin-containing compound metabolism; protoporphyrin-IX biosynthesis; 5-aminolevulinate from L-glutamyl-tRNA(Glu): step 2/2. The polypeptide is Glutamate-1-semialdehyde 2,1-aminomutase (Coxiella burnetii (strain RSA 331 / Henzerling II)).